The primary structure comprises 132 residues: TGSCCGPTFSSLSCGGGCLQPRYYRDPCCCRPVSCQTTVSRPVTFVSRCTRPICEPCRRPVCCDPCSLQEGCCRPITCCPTSCQAVVCRPCCWATTCCQPVSVQCPCCRPTSCQPAPCSRTTCRTFRTSPCC.

Its function is as follows. The keratin products of mammalian epidermal derivatives such as wool and hair consist of microfibrils embedded in a rigid matrix of other proteins. The matrix proteins include the high-sulfur and high-tyrosine keratins, having molecular weights of 6-20 kDa, whereas the microfibrils contain the larger, low-sulfur keratins (40-56 kDa). This chain is Keratin, high-sulfur matrix protein, IIIA3, found in Capra hircus (Goat).